A 101-amino-acid polypeptide reads, in one-letter code: Small ribosomal subunit protein bS18c (101 aa).

The protein belongs to the bacterial ribosomal protein bS18 family. Part of the 30S ribosomal subunit.

Its subcellular location is the plastid. The protein localises to the chloroplast. The protein is Small ribosomal subunit protein bS18c (rps18) of Arabidopsis thaliana (Mouse-ear cress).